The primary structure comprises 326 residues: Delta-aminolevulinic acid dehydratase (326 aa).

Residues cysteine 125, cysteine 127, and cysteine 135 each coordinate Zn(2+). The active-site Schiff-base intermediate with substrate is the lysine 200. 2 residues coordinate 5-aminolevulinate: arginine 210 and arginine 222. Glutamate 238 contributes to the Mg(2+) binding site. Lysine 253 functions as the Schiff-base intermediate with substrate in the catalytic mechanism. Serine 279 serves as a coordination point for 5-aminolevulinate.

Belongs to the ALAD family. In terms of assembly, homooctamer. The cofactor is Zn(2+).

The enzyme catalyses 2 5-aminolevulinate = porphobilinogen + 2 H2O + H(+). It participates in porphyrin-containing compound metabolism; protoporphyrin-IX biosynthesis; coproporphyrinogen-III from 5-aminolevulinate: step 1/4. Functionally, catalyzes an early step in the biosynthesis of tetrapyrroles. Binds two molecules of 5-aminolevulinate per subunit, each at a distinct site, and catalyzes their condensation to form porphobilinogen. In Methanothermobacter thermautotrophicus (strain ATCC 29096 / DSM 1053 / JCM 10044 / NBRC 100330 / Delta H) (Methanobacterium thermoautotrophicum), this protein is Delta-aminolevulinic acid dehydratase (hemB).